The chain runs to 341 residues: Pyrophosphate--fructose 6-phosphate 1-phosphotransferase (341 aa).

Gly-10 provides a ligand contact to diphosphate. Glu-103 lines the Mg(2+) pocket. Substrate contacts are provided by residues 125–127 (TID), Arg-162, 169–171 (MGR), Glu-221, Arg-265, and 271–274 (HTQR). Asp-127 acts as the Proton acceptor in catalysis.

Belongs to the phosphofructokinase type A (PFKA) family. Mixed-substrate PFK group III subfamily. Homotetramer. The cofactor is Mg(2+).

Its subcellular location is the cytoplasm. It catalyses the reaction beta-D-fructose 6-phosphate + diphosphate = beta-D-fructose 1,6-bisphosphate + phosphate + H(+). Its pathway is carbohydrate degradation; glycolysis; D-glyceraldehyde 3-phosphate and glycerone phosphate from D-glucose: step 3/4. Non-allosteric. Functionally, catalyzes the phosphorylation of D-fructose 6-phosphate, the first committing step of glycolysis. Uses inorganic phosphate (PPi) as phosphoryl donor instead of ATP like common ATP-dependent phosphofructokinases (ATP-PFKs), which renders the reaction reversible, and can thus function both in glycolysis and gluconeogenesis. Consistently, PPi-PFK can replace the enzymes of both the forward (ATP-PFK) and reverse (fructose-bisphosphatase (FBPase)) reactions. This is Pyrophosphate--fructose 6-phosphate 1-phosphotransferase from Amycolatopsis methanolica.